The primary structure comprises 261 residues: Putative diacylated glycolipid transporter LprF (261 aa).

A signal peptide spans 1 to 38 (MNGLISQACGSHRPRRPSSLGAVAILIAATLFATVVAG). Cysteine 39 carries N-palmitoyl cysteine lipidation. The S-diacylglycerol cysteine moiety is linked to residue cysteine 39. The interval 42-61 (KPTTASSPSPGSPSPEAQQI) is disordered.

The protein belongs to the LppX/LprAFG lipoprotein family. In terms of assembly, monomer. In terms of processing, modified by Lgt on Cys-39 with an S-linked diacylglycerol with a mixture of C16, C18 and C19 fatty acids (palmitic, stearic and tuberculostearic acid respectively), signal peptide is removed by LspA, modified by Lnt with an amide-linked mixture of C16 and C19 fatty acids.

The protein resides in the cell membrane. Its function is as follows. Might be involved in transporting short diacylated glycolipids to the cell outer membrane. Binds glycolipids that contain a diacylated glycerophosphate or a diacylated phosphatidylinositol moiety with C14 and C16 chains (upon overexpression in M.smegmatis; M.smegmatis does not encode this gene). Overexpression in M.smegmatis increases the cell wall glycolipid LAM/LM ratio (lipoarabinomannan/lipomannan), suggesting perhaps this protein is involved in the preferential translocation of diacylated LAM to the outer cell membrane. Overexpressing M.smegmatis cells adhere less well to hexadecane droplets, indicating decrease in the hydrophobicity of the cell surface, and have a slightly increased resistance to the antibiotic ethambutol. The polypeptide is Putative diacylated glycolipid transporter LprF (lprF) (Mycobacterium bovis (strain ATCC BAA-935 / AF2122/97)).